Consider the following 323-residue polypeptide: Aldo-keto reductase family 1 member C2 (323 aa).

Residues 20 to 24 and aspartate 50 contribute to the NADP(+) site; that span reads GFGTY. Tyrosine 24 is a substrate binding site. Catalysis depends on tyrosine 55, which acts as the Proton donor. Histidine 117 lines the substrate pocket. NADP(+) contacts are provided by residues 166–167, glutamine 190, and 216–222; these read SN and YSALGSH. Histidine 222 and tryptophan 227 together coordinate substrate. Residue 270–280 coordinates NADP(+); it reads KSYNEQRIRQN.

This sequence belongs to the aldo/keto reductase family. As to expression, expressed in fetal testes. Expressed in fetal and adult adrenal glands.

The protein localises to the cytoplasm. Its subcellular location is the cytosol. The enzyme catalyses a 3alpha-hydroxysteroid + NADP(+) = a 3-oxosteroid + NADPH + H(+). It carries out the reaction a 3alpha-hydroxysteroid + NAD(+) = a 3-oxosteroid + NADH + H(+). The catalysed reaction is 5alpha-androstane-3alpha,17beta-diol + NADP(+) = 17beta-hydroxy-5alpha-androstan-3-one + NADPH + H(+). It catalyses the reaction 5alpha-androstane-3alpha,17beta-diol + NAD(+) = 17beta-hydroxy-5alpha-androstan-3-one + NADH + H(+). The enzyme catalyses 5alpha-androstane-3alpha,17beta-diol + NAD(+) = androsterone + NADH + H(+). It carries out the reaction 17beta-estradiol + NADP(+) = estrone + NADPH + H(+). The catalysed reaction is 17beta-estradiol + NAD(+) = estrone + NADH + H(+). It catalyses the reaction (20S)-hydroxypregn-4-en-3-one + NADP(+) = progesterone + NADPH + H(+). The enzyme catalyses (20S)-hydroxypregn-4-en-3-one + NAD(+) = progesterone + NADH + H(+). It carries out the reaction androsterone + NADP(+) = 5alpha-androstan-3,17-dione + NADPH + H(+). The catalysed reaction is (3beta,5alpha,17beta)-3-hydroxy-androstan-17-yl sulfate + NADP(+) = 5alpha-dihydrotestosterone sulfate + NADPH + H(+). It catalyses the reaction (1R,2R)-1,2-dihydrobenzene-1,2-diol + NADP(+) = catechol + NADPH + H(+). The enzyme catalyses (S)-indan-1-ol + NAD(+) = indan-1-one + NADH + H(+). It carries out the reaction (S)-indan-1-ol + NADP(+) = indan-1-one + NADPH + H(+). It participates in steroid metabolism. Its activity is regulated as follows. Inhibited by hexestrol with an IC(50) of 2.8 uM, 1,10-phenanthroline with an IC(50) of 2100 uM, 1,7-phenanthroline with an IC(50) of 1500 uM, flufenamic acid with an IC(50) of 0.9 uM, indomethacin with an IC(50) of 75 uM, ibuprofen with an IC(50) of 6.9 uM, lithocholic acid with an IC(50) of 0.07 uM, ursodeoxycholic acid with an IC(50) of 0.08 uM and chenodeoxycholic acid with an IC(50) of 0.13 uM. The oxidation reaction is inhibited by low micromolar concentrations of NADPH. Cytosolic aldo-keto reductase that catalyzes the NADH and NADPH-dependent reduction of ketosteroids to hydroxysteroids. Most probably acts as a reductase in vivo since the oxidase activity measured in vitro is inhibited by physiological concentrations of NADPH. Displays a broad positional specificity acting on positions 3, 17 and 20 of steroids and regulates the metabolism of hormones like estrogens and androgens. Works in concert with the 5-alpha/5-beta-steroid reductases to convert steroid hormones into the 3-alpha/5-alpha and 3-alpha/5-beta-tetrahydrosteroids. Catalyzes the inactivation of the most potent androgen 5-alpha-dihydrotestosterone (5-alpha-DHT) to 5-alpha-androstane-3-alpha,17-beta-diol (3-alpha-diol). Also specifically able to produce 17beta-hydroxy-5alpha-androstan-3-one/5alphaDHT. May also reduce conjugated steroids such as 5alpha-dihydrotestosterone sulfate. Displays affinity for bile acids. In Homo sapiens (Human), this protein is Aldo-keto reductase family 1 member C2 (AKR1C2).